The primary structure comprises 67 residues: Small ribosomal subunit protein bS21 (67 aa).

Residues 37-52 (EKPSERKAREAAEAVR) show a composition bias toward basic and acidic residues. Residues 37–67 (EKPSERKAREAAEAVRRARKMERKRLEREGF) are disordered.

Belongs to the bacterial ribosomal protein bS21 family.

The sequence is that of Small ribosomal subunit protein bS21 from Gluconacetobacter diazotrophicus (strain ATCC 49037 / DSM 5601 / CCUG 37298 / CIP 103539 / LMG 7603 / PAl5).